Consider the following 246-residue polypeptide: NAD-dependent protein deacylase (246 aa).

Residues Pro2–Ala246 form the Deacetylase sirtuin-type domain. Residue Gly29 to Trp49 coordinates NAD(+). Positions 74 and 77 each coordinate substrate. Position 107-110 (Gln107–Asp110) interacts with NAD(+). Catalysis depends on His125, which acts as the Proton acceptor. The Zn(2+) site is built by Cys137, Cys140, Cys153, and Cys156. Residues Gly193–Ser195, Asn219–Glu221, and Ala237 each bind NAD(+).

Belongs to the sirtuin family. Class III subfamily. It depends on Zn(2+) as a cofactor.

The protein resides in the cytoplasm. It catalyses the reaction N(6)-acetyl-L-lysyl-[protein] + NAD(+) + H2O = 2''-O-acetyl-ADP-D-ribose + nicotinamide + L-lysyl-[protein]. The catalysed reaction is N(6)-succinyl-L-lysyl-[protein] + NAD(+) + H2O = 2''-O-succinyl-ADP-D-ribose + nicotinamide + L-lysyl-[protein]. Its function is as follows. NAD-dependent lysine deacetylase and desuccinylase that specifically removes acetyl and succinyl groups on target proteins. Modulates the activities of several proteins which are inactive in their acylated form. This Ralstonia nicotianae (strain ATCC BAA-1114 / GMI1000) (Ralstonia solanacearum) protein is NAD-dependent protein deacylase.